The chain runs to 246 residues: Large ribosomal subunit protein uL3 (246 aa).

Glutamine 151 is modified (N5-methylglutamine).

It belongs to the universal ribosomal protein uL3 family. In terms of assembly, part of the 50S ribosomal subunit. Forms a cluster with proteins L14 and L19. Methylated by PrmB.

In terms of biological role, one of the primary rRNA binding proteins, it binds directly near the 3'-end of the 23S rRNA, where it nucleates assembly of the 50S subunit. The polypeptide is Large ribosomal subunit protein uL3 (Bartonella quintana (strain Toulouse) (Rochalimaea quintana)).